The primary structure comprises 122 residues: Large ribosomal subunit protein uL14 (122 aa).

Belongs to the universal ribosomal protein uL14 family. In terms of assembly, part of the 50S ribosomal subunit. Forms a cluster with proteins L3 and L19. In the 70S ribosome, L14 and L19 interact and together make contacts with the 16S rRNA in bridges B5 and B8.

In terms of biological role, binds to 23S rRNA. Forms part of two intersubunit bridges in the 70S ribosome. This is Large ribosomal subunit protein uL14 from Thermomicrobium roseum (strain ATCC 27502 / DSM 5159 / P-2).